Reading from the N-terminus, the 405-residue chain is DNA primase DnaG (405 aa).

In terms of domain architecture, Toprim spans 172-248 (DSIIVVEGRA…HIDYIARAPP (77 aa)). Mg(2+) contacts are provided by Glu-178, Asp-222, and Asp-224. Residues 279–302 (AAGEKTESQMSPQQPQLTQTQPTT) form a disordered region. Over residues 290–302 (PQQPQLTQTQPTT) the composition is skewed to low complexity.

The protein belongs to the archaeal DnaG primase family. In terms of assembly, forms a ternary complex with MCM helicase and DNA. Component of the archaeal exosome complex. Mg(2+) is required as a cofactor.

The catalysed reaction is ssDNA + n NTP = ssDNA/pppN(pN)n-1 hybrid + (n-1) diphosphate.. RNA polymerase that catalyzes the synthesis of short RNA molecules used as primers for DNA polymerase during DNA replication. Also part of the exosome, which is a complex involved in RNA degradation. Acts as a poly(A)-binding protein that enhances the interaction between heteromeric, adenine-rich transcripts and the exosome. The chain is DNA primase DnaG from Pyrobaculum islandicum (strain DSM 4184 / JCM 9189 / GEO3).